A 41-amino-acid polypeptide reads, in one-letter code: Large ribosomal subunit protein bL32c (41 aa).

The protein belongs to the bacterial ribosomal protein bL32 family.

The protein localises to the plastid. In Helicosporidium sp. subsp. Simulium jonesii (Green alga), this protein is Large ribosomal subunit protein bL32c (rpl32).